The primary structure comprises 309 residues: Dicarboxylate carrier UCP2 (309 aa).

At 1 to 16 (MVGFKATDVPPTATVK) the chain is on the mitochondrial intermembrane side. 3 Solcar repeats span residues 11–106 (PTAT…VKQF), 114–203 (ASIG…IKDA), and 212–297 (DDLP…LKRA). The interval 16-63 (KFLGAGTAACIADLITFPLDTAKVRLQIQGESQGPVHATASAQYRGVM) is important for interaction with long-chain fatty acids. The helical transmembrane segment at 17–40 (FLGAGTAACIADLITFPLDTAKVR) threads the bilayer. At 41-77 (LQIQGESQGPVHATASAQYRGVMGTILTMVRTEGPRS) the chain is on the mitochondrial matrix side. Residues 78-103 (LYNGLVAGLQRQMSFASVRIGLYDSV) form a helical membrane-spanning segment. Residues 104–119 (KQFYTKGSEHASIGSR) lie on the Mitochondrial intermembrane side of the membrane. A helical transmembrane segment spans residues 120–145 (LLAGSTTGALAVAVAQPTDVVKVRFQ). Over 146-173 (AQARAGGGRRYQSTVNAYKTIAREEGFR) the chain is Mitochondrial matrix. Residues 174–199 (GLWKGTSPNVARNAIVNCAELVTYDL) traverse the membrane as a helical segment. At 200 to 217 (IKDALLKANLMTDDLPCH) the chain is on the mitochondrial intermembrane side. A helical membrane pass occupies residues 218-242 (FTSAFGAGFCTTVIASPVDVVKTRY). Over 243–268 (MNSALGQYSSAGHCALTMLQKEGPRA) the chain is Mitochondrial matrix. The helical transmembrane segment at 269–294 (FYKGFMPSFLRLGSWNVVMFVTYEQL) threads the bilayer. The important for interaction with long-chain fatty acids stretch occupies residues 278 to 285 (LRLGSWNV). At 295–309 (KRALMAACTSREAPF) the chain is on the mitochondrial intermembrane side.

The protein belongs to the mitochondrial carrier (TC 2.A.29) family. As to quaternary structure, homotetramer. Adopts an asymmetrical dimer of dimers functional form. Interacts with MICU1 (when methylated); leading to decrease the calcium sensitivity of MICU1.

It is found in the mitochondrion inner membrane. The catalysed reaction is L-aspartate(out) + phosphate(in) + H(+)(in) = L-aspartate(in) + phosphate(out) + H(+)(out). It catalyses the reaction oxaloacetate(out) + phosphate(in) + H(+)(in) = oxaloacetate(in) + phosphate(out) + H(+)(out). It carries out the reaction (S)-malate(out) + phosphate(in) + H(+)(in) = (S)-malate(in) + phosphate(out) + H(+)(out). The enzyme catalyses malonate(out) + phosphate(in) + H(+)(in) = malonate(in) + phosphate(out) + H(+)(out). The catalysed reaction is sulfate(out) + phosphate(in) + H(+)(in) = sulfate(in) + phosphate(out) + H(+)(out). It catalyses the reaction (S)-malate(out) = (S)-malate(in). It carries out the reaction L-aspartate(out) = L-aspartate(in). The enzyme catalyses phosphate(in) = phosphate(out). The catalysed reaction is chloride(in) = chloride(out). It catalyses the reaction H(+)(in) = H(+)(out). It carries out the reaction a long-chain fatty acid(out) = a long-chain fatty acid(in). Its function is as follows. Antiporter that exports dicarboxylate intermediates of the Krebs cycle in exchange for phosphate plus a proton across the inner membrane of mitochondria, a process driven by mitochondrial motive force with an overall impact on glycolysis, glutaminolysis and glutathione-dependent redox balance. Continuous export of oxaloacetate and related four-carbon dicarboxylates from mitochondrial matrix into the cytosol negatively regulates the oxidation of acetyl-CoA substrates via the Krebs cycle lowering the ATP/ADP ratio and reactive oxygen species (ROS) production. May mediate inducible proton entry into the mitochondrial matrix affecting ATP turnover as a protection mechanism against oxidative stress. The proton currents are most likely associated with fatty acid flipping across the inner membrane of mitochondria in a metabolic process regulated by free fatty acids and purine nucleotides. Regulates the use of glucose as a source of energy. Required for glucose-induced DRP1-dependent mitochondrial fission and neuron activation in the ventromedial nucleus of the hypothalamus (VMH). This mitochondrial adaptation mechanism modulates the VMH pool of glucose-excited neurons with an impact on systemic glucose homeostasis. Regulates ROS levels and metabolic reprogramming of macrophages during the resolution phase of inflammation. Attenuates ROS production in response to IL33 to preserve the integrity of the Krebs cycle required for persistent production of itaconate and subsequent GATA3-dependent differentiation of inflammation-resolving alternatively activated macrophages. Can unidirectionally transport anions including L-malate, L-aspartate, phosphate and chloride ions. Does not mediate adaptive thermogenesis. In Pongo abelii (Sumatran orangutan), this protein is Dicarboxylate carrier UCP2 (UCP2).